Consider the following 407-residue polypeptide: MPTLSVFTDVPMAQKLEGSLLKTYKQDDNPNKMFLAYKVCMTSKGRPWVSSVVRKTRMQIAQDPSLNYEYTPVMGMKSFVQASLNLLFGKNSQVIVENRAGGVQTVGDSGAFQLGAQFLKSWCQSSQIVYIVSSQKEPHGLIFQDMGFTVYEHTFWDSAHLCLDPNMLLDVVKHAPHGCVFVIGSMGNCQLTPSQWTQLMTLMKSKEIFPFFDIPYQGLSTGDLEEDARFLHYFVSQGFEFFCSQSLSKNFGIYDEGVGTLVVVTLDNQLLLRVLSQLMNFARALWLNPPTTGARIITSVLCNPAMQGEWRQSLEGVVENVMMTKEKVKEKLRLLGTPGSWDHITEQKGSHSYLGLNSQQVEYLISEKHIYIPKNGRINFTCINSYNIDYITSSINEAVCFTKDSER.

N6-(pyridoxal phosphate)lysine is present on lysine 249.

This sequence belongs to the class-I pyridoxal-phosphate-dependent aminotransferase family. As to quaternary structure, homodimer. Pyridoxal 5'-phosphate serves as cofactor.

It is found in the cytoplasm. The enzyme catalyses L-aspartate + 2-oxoglutarate = oxaloacetate + L-glutamate. The sequence is that of Putative aspartate aminotransferase, cytoplasmic 2 (GOT1L1) from Bos taurus (Bovine).